We begin with the raw amino-acid sequence, 286 residues long: uncharacterized protein (286 aa).

Residue histidine 183 is the Proton donor of the active site. Cysteine 277 acts as the Nucleophile in catalysis.

This sequence belongs to the DDAH family.

This is an uncharacterized protein from Bacillus subtilis (strain 168).